A 321-amino-acid chain; its full sequence is Cyclic AMP-AMP-AMP synthase (321 aa).

Residue Lys63 participates in ATP binding. Mg(2+)-binding residues include Asp72 and Asp74. ATP is bound by residues Asp74, His162, Lys185, 201 to 203 (KSF), and Asn270.

Belongs to the CD-NTase family. A01 subfamily. Forms complexes with Cap7 with 1:1 and 2:2 stoichimetry, and a 1:1:6 CdnC:Cap7:Cap6 complex. Mg(2+) is required as a cofactor.

It catalyses the reaction 3 ATP = 3',3',3'-c-tri-AMP + 3 diphosphate. The catalysed reaction is 2 ATP = 3',3'-c-di-AMP + 2 diphosphate. With respect to regulation, the 2:2 CdnC:Cap7 (Cap7 is also called HORMA) complex is activated for cAAA synthesis by long dsDNA, but not 40 bp dsDNA or ssDNA; the 1:1 complex is inactive in vitro. The 2:2:DNA complex is catalytically disassembled and inactivated by Cap6 (also called Trip13). Functionally, cyclic nucleotide synthase (second messenger synthase) of a CBASS antivirus system. CBASS (cyclic oligonucleotide-based antiphage signaling system) provides immunity against bacteriophage. The CD-NTase protein synthesizes cyclic nucleotides in response to infection; these serve as specific second messenger signals. The signals activate a diverse range of effectors, leading to bacterial cell death and thus abortive phage infection. A type III-C(AAA) CBASS system. Cyclic nucleotide synthase that upon activation catalyzes the synthesis of 3',3',3'-cyclic AMP-AMP-AMP (3',3',3'-c-tri-AMP or cAAA) as the major product, and 3',3'-c-di-AMP as a minor product. Cannot use GTP as a substrate. In terms of biological role, protects E.coli strain JP313 against bacteriophage lambda cI- infection. When the cdnC-cap7-cap6-nucC operon is transformed into a susceptible strain it confers bacteriophage immunity. Mutations in the sensor (Cap7 also called HORMA) or effector proteins (CdnC, NucC) but not the disassembly protein (Cap6 also called Trip13) no longer confer immunity. The presence of the intact operon leads to culture collapse and cell death, which occurs before the phage has finished its replication cycle, thus protecting non-infected bacteria by aborting the phage infection and preventing its propagation. This is Cyclic AMP-AMP-AMP synthase from Escherichia coli (strain MS 115-1).